A 789-amino-acid polypeptide reads, in one-letter code: MKSNQERSNECLPPKKREIPATSRPSEEKATALPSDNHCVEGVAWLPSTPGSRGHGGGRHGPAGTSGEHGLQGMGLHKALSAGLDYSPPSAPRSVPTANTLPTVYPPPQSGTPVSPVQYAHLSHTFQFIGSSQYSGPYAGFIPSQLISPPGNPVTSAVASAAGATTPSQRSQLEAYSTLLANMGSLSQAPGHKVEPPPQQHLGRAAGLVNPGSPPPTQQNQYIHISSSPQSSGRATSPPIPVHLHPHQTMIPHTLTLGPSSQVVVQYSDAGGHFVPRESTKKAESSRLQQAMQAKEVLNGEMEKSRRYGASSSVELSLGKTSSKSVPHPYESRHVVVHPSPADYSSRDTSGVRGSVMVLPNSSTPSADLETQQATHREASPSTLNDKSGLHLGKPGHRSYALSPHTVIQTTHSASEPLPVGLPATAFYAGAQPPVIGYLSSQQQAITYAGGLPQHLVIPGTQPLLIPVGSPDMDTPGAASAIVTSSPQFAAVPHTFVTTALPKSENFNPEALVTQAAYPAMVQAQIHLPVVQSVASPAAASPTLPPYFMKGSIIQLANGELKKVEDLKTEDFIQSAEISNDLKIDSSTVERIEDSHSPGVAVIQFAVGEHRAQVSVEVLVEYPFFVFGQGWSSCCPERTSQLFDLPCSKLSVGDVCISLTLKNLKNGSVKKGQPVDPASALLKHAKTDSLAGSRHRYAEQENGINQGSAQVLSENGELKFPEKIGLPAAPFLTKIEPSKPTATRKRRWSAPETRKLEKSEDEPPLTLPKPSLIPQEVKICIEGRSNVGK.

Residues 1–30 (MKSNQERSNECLPPKKREIPATSRPSEEKA) show a composition bias toward basic and acidic residues. The segment at 1–73 (MKSNQERSNE…GTSGEHGLQG (73 aa)) is disordered. Lysine 16 participates in a covalent cross-link: Glycyl lysine isopeptide (Lys-Gly) (interchain with G-Cter in SUMO). Phosphoserine occurs at positions 81 and 87. 2 disordered regions span residues 188–237 (QAPG…RATS) and 296–397 (EVLN…KPGH). Lysine 193 participates in a covalent cross-link: Glycyl lysine isopeptide (Lys-Gly) (interchain with G-Cter in SUMO). The residue at position 213 (serine 213) is a Phosphoserine. A Phosphothreonine modification is found at threonine 217. Polar residues-rich tracts occupy residues 218-235 (QQNQ…SGRA), 310-325 (ASSS…SSKS), and 360-386 (PNSS…TLND). Serine 228 is subject to Phosphoserine. The tract at residues 468–578 (VGSPDMDTPG…TEDFIQSAEI (111 aa)) is self-association. The segment at 512-789 (LVTQAAYPAM…CIEGRSNVGK (278 aa)) is interaction with USP7. An RNA-binding region spans residues 514 to 740 (TQAAYPAMVQ…FLTKIEPSKP (227 aa)). An AXH domain is found at 536–667 (SPAAASPTLP…SLTLKNLKNG (132 aa)). Glycyl lysine isopeptide (Lys-Gly) (interchain with G-Cter in SUMO) cross-links involve residues lysine 583, lysine 670, and lysine 719. Residues 736-772 (EPSKPTATRKRRWSAPETRKLEKSEDEPPLTLPKPSL) form a disordered region. Serine 749 is modified (phosphoserine). The Nuclear localization signal signature appears at 768 to 771 (PKPS).

It belongs to the ATXN1 family. As to quaternary structure, homooligomer. Interacts with CIC. Interacts with ANP32A, PQBP1, UBQLN4, ATXN1L and USP7. Directly interacts with RBPJ; this interaction is disrupted in the presence of Notch intracellular domain. Competes with ATXN1L for RBPJ-binding. Found in a complex with CIC and ATXN1L. In terms of processing, ubiquitinated by UBE3A, leading to its degradation by the proteasome. Phosphorylation at Ser-749 increases the pathogenicity of proteins with an expanded polyglutamine tract. Post-translationally, sumoylation is dependent on nuclear localization and phosphorylation at Ser-749. It is reduced in the presence of an expanded polyglutamine tract.

Its subcellular location is the cytoplasm. The protein localises to the nucleus. Its function is as follows. Chromatin-binding factor that repress Notch signaling in the absence of Notch intracellular domain by acting as a CBF1 corepressor. Binds to the HEY promoter and might assist, along with NCOR2, RBPJ-mediated repression. Binds RNA in vitro. May be involved in RNA metabolism. In concert with CIC and ATXN1L, involved brain development. The chain is Ataxin-1 (Atxn1) from Rattus norvegicus (Rat).